The chain runs to 427 residues: Trigger factor (427 aa).

In terms of domain architecture, PPIase FKBP-type spans G163–P248.

The protein belongs to the FKBP-type PPIase family. Tig subfamily.

It localises to the cytoplasm. The enzyme catalyses [protein]-peptidylproline (omega=180) = [protein]-peptidylproline (omega=0). In terms of biological role, involved in protein export. Acts as a chaperone by maintaining the newly synthesized protein in an open conformation. Functions as a peptidyl-prolyl cis-trans isomerase. This is Trigger factor from Streptococcus pyogenes serotype M49 (strain NZ131).